The following is a 279-amino-acid chain: Oxygen-dependent coproporphyrinogen-III oxidase (279 aa).

S102 contacts substrate. A divalent metal cation contacts are provided by H106 and H116. The active-site Proton donor is the H116. Position 118-120 (118-120 (NTR)) interacts with substrate. Residues H149 and H179 each contribute to the a divalent metal cation site. The interval 244–279 (YVEFNLLYDRGTKFGLMTDGNVEAILMSLPPEVKWA) is important for dimerization.

Belongs to the aerobic coproporphyrinogen-III oxidase family. Homodimer. It depends on a divalent metal cation as a cofactor.

It localises to the cytoplasm. The catalysed reaction is coproporphyrinogen III + O2 + 2 H(+) = protoporphyrinogen IX + 2 CO2 + 2 H2O. It participates in porphyrin-containing compound metabolism; protoporphyrin-IX biosynthesis; protoporphyrinogen-IX from coproporphyrinogen-III (O2 route): step 1/1. Functionally, involved in the heme biosynthesis. Catalyzes the aerobic oxidative decarboxylation of propionate groups of rings A and B of coproporphyrinogen-III to yield the vinyl groups in protoporphyrinogen-IX. This chain is Oxygen-dependent coproporphyrinogen-III oxidase, found in Rickettsia bellii (strain OSU 85-389).